The chain runs to 384 residues: Glucans biosynthesis protein C (384 aa).

The next 10 membrane-spanning stretches (helical) occupy residues 17-37 (AWLM…THSW), 54-74 (FIHA…SYML), 91-111 (VGIP…ILLQ), 140-160 (LWFL…FTWF), 173-193 (AISL…YAAI), 212-232 (FIVM…LAFI), 240-260 (FTTP…AYLL), 274-294 (TESV…FSLG), 311-331 (ASLF…AYIT), and 338-358 (LIGF…LYEI).

Belongs to the acyltransferase 3 family. OpgC subfamily.

The protein localises to the cell membrane. Its pathway is glycan metabolism; osmoregulated periplasmic glucan (OPG) biosynthesis. Functionally, necessary for the succinyl substitution of periplasmic glucans. Could catalyze the transfer of succinyl residues from the cytoplasmic side of the membrane to the nascent glucan backbones on the periplasmic side of the membrane. The protein is Glucans biosynthesis protein C of Salmonella choleraesuis (strain SC-B67).